The primary structure comprises 170 residues: Adenine phosphoribosyltransferase (170 aa).

The protein belongs to the purine/pyrimidine phosphoribosyltransferase family. As to quaternary structure, homodimer.

It is found in the cytoplasm. The enzyme catalyses AMP + diphosphate = 5-phospho-alpha-D-ribose 1-diphosphate + adenine. It participates in purine metabolism; AMP biosynthesis via salvage pathway; AMP from adenine: step 1/1. Catalyzes a salvage reaction resulting in the formation of AMP, that is energically less costly than de novo synthesis. The polypeptide is Adenine phosphoribosyltransferase (Bacillus cereus (strain G9842)).